Reading from the N-terminus, the 65-residue chain is Large ribosomal subunit protein bL35 (65 aa).

This sequence belongs to the bacterial ribosomal protein bL35 family.

The sequence is that of Large ribosomal subunit protein bL35 from Wolbachia sp. subsp. Brugia malayi (strain TRS).